The chain runs to 190 residues: Elongation factor P (190 aa).

Belongs to the elongation factor P family.

The protein resides in the cytoplasm. It participates in protein biosynthesis; polypeptide chain elongation. In terms of biological role, involved in peptide bond synthesis. Stimulates efficient translation and peptide-bond synthesis on native or reconstituted 70S ribosomes in vitro. Probably functions indirectly by altering the affinity of the ribosome for aminoacyl-tRNA, thus increasing their reactivity as acceptors for peptidyl transferase. This is Elongation factor P from Bartonella bacilliformis (strain ATCC 35685 / KC583 / Herrer 020/F12,63).